The chain runs to 101 residues: Small ribosomal subunit protein uS14 (101 aa).

This sequence belongs to the universal ribosomal protein uS14 family. In terms of assembly, part of the 30S ribosomal subunit. Contacts proteins S3 and S10.

In terms of biological role, binds 16S rRNA, required for the assembly of 30S particles and may also be responsible for determining the conformation of the 16S rRNA at the A site. This is Small ribosomal subunit protein uS14 from Paramagnetospirillum magneticum (strain ATCC 700264 / AMB-1) (Magnetospirillum magneticum).